A 192-amino-acid chain; its full sequence is Dihydrofolate reductase (192 aa).

In terms of domain architecture, DHFR spans 5-191; it reads NVAIIVAALK…FTYNYTLWTR (187 aa). Residues A11 and 18–24 contribute to the NADP(+) site; that span reads GIGYKGK. 32–37 lines the substrate pocket; the sequence is EIRYFK. 56–58 is an NADP(+) binding site; it reads RKT. Residue R72 coordinates substrate. 78–80 provides a ligand contact to NADP(+); sequence SRS. Substrate contacts are provided by I112 and Y118. 113 to 120 contacts NADP(+); it reads GGAEIYNE.

It belongs to the dihydrofolate reductase family.

It catalyses the reaction (6S)-5,6,7,8-tetrahydrofolate + NADP(+) = 7,8-dihydrofolate + NADPH + H(+). It functions in the pathway cofactor biosynthesis; tetrahydrofolate biosynthesis; 5,6,7,8-tetrahydrofolate from 7,8-dihydrofolate: step 1/1. Key enzyme in folate metabolism. Catalyzes an essential reaction for de novo glycine and purine synthesis, and for DNA precursor synthesis. This is Dihydrofolate reductase (DFR1) from Candida albicans (Yeast).